A 252-amino-acid polypeptide reads, in one-letter code: N-acetylglucosaminyl-phosphatidylinositol de-N-acetylase (252 aa).

A helical membrane pass occupies residues 2 to 22; sequence EVVGLLCVAVAVLTWGFLRVW. Residues 23 to 252 lie on the Cytoplasmic side of the membrane; sequence NSAERMRSPE…YMSVNSLQLL (230 aa).

This sequence belongs to the PIGL family.

The protein localises to the endoplasmic reticulum membrane. The enzyme catalyses a 6-(N-acetyl-alpha-D-glucosaminyl)-1-(1,2-diacyl-sn-glycero-3-phospho)-1D-myo-inositol + H2O = a 6-(alpha-D-glucosaminyl)-1-(1,2-diacyl-sn-glycero-3-phospho)-1D-myo-inositol + acetate. It participates in glycolipid biosynthesis; glycosylphosphatidylinositol-anchor biosynthesis. Functionally, catalyzes the second step of glycosylphosphatidylinositol (GPI) biosynthesis, which is the de-N-acetylation of N-acetylglucosaminyl-phosphatidylinositol. The sequence is that of N-acetylglucosaminyl-phosphatidylinositol de-N-acetylase (Pigl) from Rattus norvegicus (Rat).